We begin with the raw amino-acid sequence, 326 residues long: NADH-ubiquinone oxidoreductase chain 1 (326 aa).

The next 9 helical transmembrane spans lie at 1–21 (MFLLSLLIKIITIILPLLVAV), 41–61 (PNIVGVFGLLQPLADGLKLFV), 72–92 (IIIFILAPILTFLLALVSWCV), 104–124 (INIGVLYILAISSLGVYGIIT), 152–172 (IGLILINVLLCSGSLNFTEIV), 177–197 (SIWFVIPLFPIFIMFYISILA), 234–256 (YANMILMCSLTTILFFGGWLPPF), 268–288 (VWFGLKTTFLLFGFIWIRSSF), and 303–323 (ILLPLSLAWVFLISGILLSFN).

Belongs to the complex I subunit 1 family.

It is found in the mitochondrion inner membrane. It catalyses the reaction a ubiquinone + NADH + 5 H(+)(in) = a ubiquinol + NAD(+) + 4 H(+)(out). In terms of biological role, core subunit of the mitochondrial membrane respiratory chain NADH dehydrogenase (Complex I) that is believed to belong to the minimal assembly required for catalysis. Complex I functions in the transfer of electrons from NADH to the respiratory chain. The immediate electron acceptor for the enzyme is believed to be ubiquinone. The protein is NADH-ubiquinone oxidoreductase chain 1 (ND1) of Chondrus crispus (Carrageen Irish moss).